A 346-amino-acid chain; its full sequence is Signal recognition particle receptor FtsY (346 aa).

Residues 143 to 150 (GVNGVGKT), 225 to 229 (DTSGR), and 289 to 292 (TKMD) each bind GTP.

The protein belongs to the GTP-binding SRP family. FtsY subfamily. Part of the signal recognition particle protein translocation system, which is composed of SRP and FtsY.

The protein localises to the cell membrane. Its subcellular location is the cytoplasm. The enzyme catalyses GTP + H2O = GDP + phosphate + H(+). Involved in targeting and insertion of nascent membrane proteins into the cytoplasmic membrane. Acts as a receptor for the complex formed by the signal recognition particle (SRP) and the ribosome-nascent chain (RNC). The polypeptide is Signal recognition particle receptor FtsY (Mycoplasma genitalium (strain ATCC 33530 / DSM 19775 / NCTC 10195 / G37) (Mycoplasmoides genitalium)).